The chain runs to 873 residues: F-BAR domain only protein 1 (873 aa).

In terms of domain architecture, F-BAR spans 1–248 (MSYFGEHFWG…NVENVTVDML (248 aa)). Residues 1 to 275 (MSYFGEHFWG…LDFDAYSSAA (275 aa)) are mediates membrane-binding. Positions 153–172 (RENTSQKEMDKAETKSKKAA) are disordered. Positions 155-178 (NTSQKEMDKAETKSKKAADSLRRS) form a coiled coil. Residues 267-439 (DFDAYSSAAL…KSLFGPPLES (173 aa)) form a mediates interaction with the adaptor protein complex AP-2 region. Phosphoserine occurs at positions 295, 343, and 368. Positions 302-347 (SVDFLESDSGVPPEVDDEGFTVRPDISQNNGAEPPRFSSSDSDFDD) are disordered. Disordered regions lie at residues 381–600 (GSLI…RGPS) and 813–833 (SGHL…SPVA). Low complexity predominate over residues 447 to 466 (TGSSSLGFTSSPSPFSSSSP). S518 is subject to Phosphoserine. The span at 567–576 (SLSPSPLGSS) shows a compositional bias: low complexity. Residues 593-873 (HGISRGPSPV…FATGMYLVSC (281 aa)) form a mediates interaction with AGFG1, CALM, DAB2, EPS15, EPS15R, ITSN1 and clathrin region. Position 600 is a phosphoserine (S600). An MHD domain is found at 609-872 (ALPVATAFTE…RFATGMYLVS (264 aa)). Residues 816–827 (LSASWQPQSGPS) are compositionally biased toward polar residues.

This sequence belongs to the FCHO family. In terms of assembly, may oligomerize and form homotetramer. Interacts with AP2A2 and AP2B1; 2 subunits of the adaptor protein complex AP-2. Interacts with DAB2. Interacts with clathrin (CLTC or CLTCL1). Interacts with EPS15, EPS15R and ITSN1. Interacts with AGFG1 and CALM. May interact with ACVR1; linking this receptor to clathrin-mediated endocytosis. Mainly detected in brain and spleen.

It localises to the membrane. The protein localises to the clathrin-coated pit. Functionally, functions in an early step of clathrin-mediated endocytosis. Has both a membrane binding/bending activity and the ability to recruit proteins essential to the formation of functional clathrin-coated pits. May regulate Bmp signaling by regulating clathrin-mediated endocytosis of Bmp receptors. Involved in the regulation of T-cell poliferation and activation. Affects TCR clustering upon receptor triggering and modulates its internalisation, playing a role in TCR-dependent T-cell activation. The polypeptide is F-BAR domain only protein 1 (Mus musculus (Mouse)).